A 192-amino-acid polypeptide reads, in one-letter code: Large ribosomal subunit protein uL5 (192 aa).

The protein belongs to the universal ribosomal protein uL5 family. Part of the 50S ribosomal subunit; part of the 5S rRNA/L5/L18/L25 subcomplex. Contacts the 5S rRNA and the P site tRNA. Forms a bridge to the 30S subunit in the 70S ribosome.

In terms of biological role, this is one of the proteins that bind and probably mediate the attachment of the 5S RNA into the large ribosomal subunit, where it forms part of the central protuberance. In the 70S ribosome it contacts protein S13 of the 30S subunit (bridge B1b), connecting the 2 subunits; this bridge is implicated in subunit movement. Contacts the P site tRNA; the 5S rRNA and some of its associated proteins might help stabilize positioning of ribosome-bound tRNAs. The polypeptide is Large ribosomal subunit protein uL5 (Zymomonas mobilis subsp. mobilis (strain ATCC 31821 / ZM4 / CP4)).